A 177-amino-acid polypeptide reads, in one-letter code: Neuroblastoma suppressor of tumorigenicity 1 (177 aa).

Residues 1 to 16 (MLWFVVGALFPALLLA) form the signal peptide. 5 cysteine pairs are disulfide-bonded: C34–C84, C48–C98, C58–C117, C62–C119, and C81–C122. A CTCK domain is found at 34 to 123 (CEAKNITQIV…ILHCSCQACG (90 aa)). The tract at residues 143–177 (MPAEGPGPHHYAHHQQEVEEPPASSHHHHEEEGDE) is disordered.

The protein belongs to the DAN family.

It is found in the secreted. May act as a tumor suppressor. The chain is Neuroblastoma suppressor of tumorigenicity 1 (NBL1) from Gallus gallus (Chicken).